A 281-amino-acid chain; its full sequence is 3-deoxy-manno-octulosonate cytidylyltransferase (281 aa).

The protein belongs to the KdsB family.

The protein localises to the cytoplasm. It carries out the reaction 3-deoxy-alpha-D-manno-oct-2-ulosonate + CTP = CMP-3-deoxy-beta-D-manno-octulosonate + diphosphate. The protein operates within nucleotide-sugar biosynthesis; CMP-3-deoxy-D-manno-octulosonate biosynthesis; CMP-3-deoxy-D-manno-octulosonate from 3-deoxy-D-manno-octulosonate and CTP: step 1/1. It functions in the pathway bacterial outer membrane biogenesis; lipopolysaccharide biosynthesis. Its function is as follows. Activates KDO (a required 8-carbon sugar) for incorporation into bacterial lipopolysaccharide in Gram-negative bacteria. This is 3-deoxy-manno-octulosonate cytidylyltransferase from Xanthomonas campestris pv. campestris (strain B100).